Reading from the N-terminus, the 138-residue chain is Cell division protein SepF (138 aa).

A disordered region spans residues 1–59 (MNNKFKDFFGFGDNDSYEERDAYEEHYDEQEEMQNSNRPTNSRDSNVVSIKAGQAGSGP). Over residues 33–48 (MQNSNRPTNSRDSNVV) the composition is skewed to polar residues.

It belongs to the SepF family. Homodimer. Interacts with FtsZ.

It is found in the cytoplasm. In terms of biological role, cell division protein that is part of the divisome complex and is recruited early to the Z-ring. Probably stimulates Z-ring formation, perhaps through the cross-linking of FtsZ protofilaments. Its function overlaps with FtsA. The protein is Cell division protein SepF of Lactobacillus delbrueckii subsp. bulgaricus (strain ATCC 11842 / DSM 20081 / BCRC 10696 / JCM 1002 / NBRC 13953 / NCIMB 11778 / NCTC 12712 / WDCM 00102 / Lb 14).